A 387-amino-acid chain; its full sequence is 1-deoxy-D-xylulose 5-phosphate reductoisomerase (387 aa).

T10, G11, S12, V13, N38, and N119 together coordinate NADPH. K120 serves as a coordination point for 1-deoxy-D-xylulose 5-phosphate. An NADPH-binding site is contributed by E121. D145 contacts Mn(2+). 1-deoxy-D-xylulose 5-phosphate is bound by residues S146, E147, S170, and H193. E147 serves as a coordination point for Mn(2+). G199 contacts NADPH. The 1-deoxy-D-xylulose 5-phosphate site is built by S206, N211, K212, and E215. E215 contacts Mn(2+).

It belongs to the DXR family. Requires Mg(2+) as cofactor. It depends on Mn(2+) as a cofactor.

It catalyses the reaction 2-C-methyl-D-erythritol 4-phosphate + NADP(+) = 1-deoxy-D-xylulose 5-phosphate + NADPH + H(+). The protein operates within isoprenoid biosynthesis; isopentenyl diphosphate biosynthesis via DXP pathway; isopentenyl diphosphate from 1-deoxy-D-xylulose 5-phosphate: step 1/6. In terms of biological role, catalyzes the NADPH-dependent rearrangement and reduction of 1-deoxy-D-xylulose-5-phosphate (DXP) to 2-C-methyl-D-erythritol 4-phosphate (MEP). This is 1-deoxy-D-xylulose 5-phosphate reductoisomerase from Wolbachia sp. subsp. Drosophila simulans (strain wRi).